A 276-amino-acid polypeptide reads, in one-letter code: MESTIGIDAGGTLTKIAYLNEKKKLTFEKFYSNEQDKIIDWLKKQTSIKQICITGGKAKQLQQLLSDSYKIVELNEFEATLVGVRYILKEEKYDINNFVLTNIGTGTSIHYIYNDRYIRAGGTGVGGGTIMGLSKLLTNIDHFEDVIPLTKVGSRKDLDITVGDIYGGILSPIDNSLTASNFGKAATIESNYNNSDILATVQGLVGEVVTALSLQFAETKNIGHIIYIGSTLCNNIHLQNIISSYTKYQNKTPIFLRDGGNSGAIGALLYATNKKS.

ATP is bound at residue 8–15 (DAGGTLTK). Glu76 serves as the catalytic Proton acceptor. ATP-binding positions include Thr105, 127–131 (GGTIM), Phe143, and Ser230.

Belongs to the type II pantothenate kinase family. In terms of assembly, homodimer.

The protein resides in the cytoplasm. It carries out the reaction (R)-pantothenate + ATP = (R)-4'-phosphopantothenate + ADP + H(+). The protein operates within cofactor biosynthesis; coenzyme A biosynthesis; CoA from (R)-pantothenate: step 1/5. Functionally, catalyzes the phosphorylation of pantothenate (Pan), the first step in CoA biosynthesis. The sequence is that of Type II pantothenate kinase from Bacillus cereus (strain AH820).